Reading from the N-terminus, the 319-residue chain is Malate dehydrogenase (319 aa).

Residues 10 to 15 and D34 each bind NAD(+); that span reads GAGNIG. Positions 83 and 89 each coordinate substrate. Residues N96 and 119 to 121 contribute to the NAD(+) site; that span reads ITN. Residues N121 and R152 each contribute to the substrate site. Residue H176 is the Proton acceptor of the active site.

The protein belongs to the LDH/MDH superfamily. MDH type 3 family.

The catalysed reaction is (S)-malate + NAD(+) = oxaloacetate + NADH + H(+). Functionally, catalyzes the reversible oxidation of malate to oxaloacetate. The polypeptide is Malate dehydrogenase (Francisella philomiragia subsp. philomiragia (strain ATCC 25017 / CCUG 19701 / FSC 153 / O#319-036)).